The primary structure comprises 354 residues: S-adenosylmethionine:tRNA ribosyltransferase-isomerase (354 aa).

This sequence belongs to the QueA family. Monomer.

The protein resides in the cytoplasm. It catalyses the reaction 7-aminomethyl-7-carbaguanosine(34) in tRNA + S-adenosyl-L-methionine = epoxyqueuosine(34) in tRNA + adenine + L-methionine + 2 H(+). Its pathway is tRNA modification; tRNA-queuosine biosynthesis. Functionally, transfers and isomerizes the ribose moiety from AdoMet to the 7-aminomethyl group of 7-deazaguanine (preQ1-tRNA) to give epoxyqueuosine (oQ-tRNA). The sequence is that of S-adenosylmethionine:tRNA ribosyltransferase-isomerase from Pseudomonas fluorescens (strain ATCC BAA-477 / NRRL B-23932 / Pf-5).